The chain runs to 513 residues: ATP synthase subunit alpha (513 aa).

Residue 169–176 (GDRQTGKT) coordinates ATP.

This sequence belongs to the ATPase alpha/beta chains family. F-type ATPases have 2 components, CF(1) - the catalytic core - and CF(0) - the membrane proton channel. CF(1) has five subunits: alpha(3), beta(3), gamma(1), delta(1), epsilon(1). CF(0) has three main subunits: a(1), b(2) and c(9-12). The alpha and beta chains form an alternating ring which encloses part of the gamma chain. CF(1) is attached to CF(0) by a central stalk formed by the gamma and epsilon chains, while a peripheral stalk is formed by the delta and b chains.

The protein resides in the cell inner membrane. The enzyme catalyses ATP + H2O + 4 H(+)(in) = ADP + phosphate + 5 H(+)(out). Its function is as follows. Produces ATP from ADP in the presence of a proton gradient across the membrane. The alpha chain is a regulatory subunit. In Cupriavidus metallidurans (strain ATCC 43123 / DSM 2839 / NBRC 102507 / CH34) (Ralstonia metallidurans), this protein is ATP synthase subunit alpha.